The following is a 68-amino-acid chain: MKILCLLFAVLLFLFQAAPGSADPLFPDTVACRTQGNFCRAGACPPTFTISGQCHGGLLNCCAKIPAQ.

The signal sequence occupies residues 1–19 (MKILCLLFAVLLFLFQAAP). The propeptide occupies 20–25 (GSADPL). 3 disulfide bridges follow: Cys-32–Cys-61, Cys-39–Cys-54, and Cys-44–Cys-62.

It belongs to the beta-defensin family. Strong expression in the testis, liver, gall bladder and kidney. Also expressed in the ovary and male and female reproductive tracts. Expressed in the ovarian stroma and the theca and granulosa layers of the ovarian follicle.

It is found in the secreted. It localises to the cytoplasmic granule. Functionally, has bactericidal activity. The chain is Gallinacin-10 (GAL10) from Gallus gallus (Chicken).